The primary structure comprises 317 residues: Beta-ketoacyl-[acyl-carrier-protein] synthase III (317 aa).

Catalysis depends on residues C112 and H244. The tract at residues 245-249 (QANIR) is ACP-binding. The active site involves N274.

Belongs to the thiolase-like superfamily. FabH family. As to quaternary structure, homodimer.

Its subcellular location is the cytoplasm. It catalyses the reaction malonyl-[ACP] + acetyl-CoA + H(+) = 3-oxobutanoyl-[ACP] + CO2 + CoA. Its pathway is lipid metabolism; fatty acid biosynthesis. Functionally, catalyzes the condensation reaction of fatty acid synthesis by the addition to an acyl acceptor of two carbons from malonyl-ACP. Catalyzes the first condensation reaction which initiates fatty acid synthesis and may therefore play a role in governing the total rate of fatty acid production. Possesses both acetoacetyl-ACP synthase and acetyl transacylase activities. Its substrate specificity determines the biosynthesis of branched-chain and/or straight-chain of fatty acids. The protein is Beta-ketoacyl-[acyl-carrier-protein] synthase III of Rickettsia massiliae (strain Mtu5).